Reading from the N-terminus, the 340-residue chain is Phosphoribosylformylglycinamidine cyclo-ligase (340 aa).

Belongs to the AIR synthase family.

The protein localises to the cytoplasm. It catalyses the reaction 2-formamido-N(1)-(5-O-phospho-beta-D-ribosyl)acetamidine + ATP = 5-amino-1-(5-phospho-beta-D-ribosyl)imidazole + ADP + phosphate + H(+). Its pathway is purine metabolism; IMP biosynthesis via de novo pathway; 5-amino-1-(5-phospho-D-ribosyl)imidazole from N(2)-formyl-N(1)-(5-phospho-D-ribosyl)glycinamide: step 2/2. The sequence is that of Phosphoribosylformylglycinamidine cyclo-ligase from Streptococcus pyogenes serotype M1.